We begin with the raw amino-acid sequence, 523 residues long: 2-isopropylmalate synthase (523 aa).

The Pyruvate carboxyltransferase domain occupies 5–267 (VIIFDTTLRD…HTNINHHEIW (263 aa)). Positions 14, 202, 204, and 238 each coordinate Mn(2+). The tract at residues 392–523 (RLDYFSVQSG…QNKENNKETV (132 aa)) is regulatory domain.

This sequence belongs to the alpha-IPM synthase/homocitrate synthase family. LeuA type 1 subfamily. Homodimer. Requires Mn(2+) as cofactor.

Its subcellular location is the cytoplasm. It carries out the reaction 3-methyl-2-oxobutanoate + acetyl-CoA + H2O = (2S)-2-isopropylmalate + CoA + H(+). The protein operates within amino-acid biosynthesis; L-leucine biosynthesis; L-leucine from 3-methyl-2-oxobutanoate: step 1/4. Functionally, catalyzes the condensation of the acetyl group of acetyl-CoA with 3-methyl-2-oxobutanoate (2-ketoisovalerate) to form 3-carboxy-3-hydroxy-4-methylpentanoate (2-isopropylmalate). The polypeptide is 2-isopropylmalate synthase (Salmonella paratyphi A (strain ATCC 9150 / SARB42)).